The sequence spans 195 residues: Imidazoleglycerol-phosphate dehydratase (195 aa).

It belongs to the imidazoleglycerol-phosphate dehydratase family.

It localises to the cytoplasm. The catalysed reaction is D-erythro-1-(imidazol-4-yl)glycerol 3-phosphate = 3-(imidazol-4-yl)-2-oxopropyl phosphate + H2O. Its pathway is amino-acid biosynthesis; L-histidine biosynthesis; L-histidine from 5-phospho-alpha-D-ribose 1-diphosphate: step 6/9. This Deinococcus deserti (strain DSM 17065 / CIP 109153 / LMG 22923 / VCD115) protein is Imidazoleglycerol-phosphate dehydratase.